Here is a 696-residue protein sequence, read N- to C-terminus: Two-component response regulator ORR22 (696 aa).

The Response regulatory domain maps to Arg27 to Val142. Residue Asp78 is modified to 4-aspartylphosphate. The tract at residues Leu154–Ala214 is disordered. The segment covering Thr176 to Arg185 has biased composition (polar residues). Residues Gly195–Glu211 are compositionally biased toward acidic residues. A DNA-binding region (myb-like GARP) is located at residues Ala214–Lys273.

It belongs to the ARR family. Type-B subfamily. In terms of processing, two-component system major event consists of a His-to-Asp phosphorelay between a sensor histidine kinase (HK) and a response regulator (RR). In plants, the His-to-Asp phosphorelay involves an additional intermediate named Histidine-containing phosphotransfer protein (HPt). This multistep phosphorelay consists of a His-Asp-His-Asp sequential transfer of a phosphate group between first a His and an Asp of the HK protein, followed by the transfer to a conserved His of the HPt protein and finally the transfer to an Asp in the receiver domain of the RR protein.

The protein resides in the nucleus. Its function is as follows. Transcriptional activator that binds specific DNA sequence. Functions as a response regulator involved in His-to-Asp phosphorelay signal transduction system. Phosphorylation of the Asp residue in the receiver domain activates the ability of the protein to promote the transcription of target genes. May directly activate some type-A response regulators in response to cytokinins. The sequence is that of Two-component response regulator ORR22 from Oryza sativa subsp. indica (Rice).